A 277-amino-acid chain; its full sequence is Shikimate dehydrogenase (NADP(+)) (277 aa).

Residues S15–S17 and T62 contribute to the shikimate site. The active-site Proton acceptor is K66. Shikimate contacts are provided by N87 and D102. Residues G127–A131, N151–K156, and I219 contribute to the NADP(+) site. Y221 provides a ligand contact to shikimate. G242 contacts NADP(+).

The protein belongs to the shikimate dehydrogenase family. Homodimer.

It catalyses the reaction shikimate + NADP(+) = 3-dehydroshikimate + NADPH + H(+). It functions in the pathway metabolic intermediate biosynthesis; chorismate biosynthesis; chorismate from D-erythrose 4-phosphate and phosphoenolpyruvate: step 4/7. Functionally, involved in the biosynthesis of the chorismate, which leads to the biosynthesis of aromatic amino acids. Catalyzes the reversible NADPH linked reduction of 3-dehydroshikimate (DHSA) to yield shikimate (SA). The polypeptide is Shikimate dehydrogenase (NADP(+)) (Bacillus cereus (strain B4264)).